Consider the following 319-residue polypeptide: Probable murein peptide carboxypeptidase (319 aa).

The active-site Nucleophile is the Ser116. Active-site charge relay system residues include Glu214 and His284.

It belongs to the peptidase S66 family.

Its subcellular location is the cytoplasm. The protein operates within cell wall degradation; peptidoglycan degradation. Its function is as follows. May be involved in the degradation of peptidoglycan by catalyzing the cleavage of the terminal D-alanine residue from cytoplasmic murein peptides. The polypeptide is Probable murein peptide carboxypeptidase (ykfA) (Bacillus subtilis (strain 168)).